Reading from the N-terminus, the 110-residue chain is UPF0060 membrane protein RPA3838 (110 aa).

Transmembrane regions (helical) follow at residues 4-24 (LLTFCAAALMEIAGCFAFWAW), 31-51 (PLWLIPGMLALALFAYLLTLA), 59-79 (AYAAYGGIYIASALLWGWAIE), and 85-105 (QWDVIGAAICLVGMSVILFGP).

This sequence belongs to the UPF0060 family.

The protein localises to the cell inner membrane. This Rhodopseudomonas palustris (strain ATCC BAA-98 / CGA009) protein is UPF0060 membrane protein RPA3838.